The chain runs to 216 residues: Major fimbrial subunit (216 aa).

A signal peptide spans 1 to 20 (MKKTLLGSLILLAFAGNVQA). A disulfide bridge links C41 with C81.

It belongs to the fimbrial protein family.

The protein localises to the fimbrium. In terms of biological role, mediates adherence to oropharyngeal epithelial cells. Helps the airway colonization process. This is Major fimbrial subunit (hifA) from Haemophilus influenzae.